The chain runs to 42 residues: Iota-conotoxin-like R11.1 (42 aa).

4 disulfide bridges follow: Cys-5/Cys-19, Cys-12/Cys-22, Cys-18/Cys-27, and Cys-21/Cys-36.

The protein belongs to the conotoxin I1 superfamily. Expressed by the venom duct.

The protein resides in the secreted. In terms of biological role, iota-conotoxins bind to voltage-gated sodium channels (Nav) and act as agonists by shifting the voltage-dependence of activation to more hyperpolarized levels. Produces general excitatory symptoms. In Conus radiatus (Rayed cone), this protein is Iota-conotoxin-like R11.1.